The chain runs to 699 residues: MAAPAARADGSDAALAAALADVPDLGRLLEVDPYLKPYAPDFQRRYNRFSQTLDNIGKNEGGIDKFSRGYESFGVHRCADGGLYCKEWAPGAEGVFLTGDFNDWNPFSYPYKKLDYGKWDLYIPPKPNKSLLVPHGSKLKVVIRSKSGEILYRISPWAKYVVRESGNVNYDWIHWDPEQPYKFKHSRPKKPRSLRIYESHVGISSHEGKIASYKHFTCNVLPRIKGLGYNCIQMMAIMEHAYYASFGYQITSFFAASSRYGTPEELKELVDTAHSMGITVLLDVVHSHASKNSEDGLNMFDGTDSCYFHSGPRGTHDLWDSRLFIYSSWEVLRFLLSNIRWWLEEYGFDGFRFDGVTSMLYHHHGIGASFSGDYHEYFGLQVDEDALTYLMLANHLVHTLYPDSITIAEDVSGMPALCSPISQGGGGFDYRLAMAIPDKWIQLVKEFKDEDWNMGNIVYTLTNRRHLEKCIAYAESHDQALVGDKSLAFWLMDAEMYTNMSVLTPFTPVIDRGIQLHKMIRLITHALGGEGYLNFMGNEFGHPEWLDFPRKGNNESYHYARRQFHLTDDDLLRYKFLNNFDRDMNKLEERCGWLSAPQAFVSEKHEGNKVIAFERAALLFIFNFHPSKSYTNYRVGTTLPGKFKIVLDSDAAEYGGHQRLDHNTDFFSEPYEHNERPSSLLVYIPSRVALILQNVDPPN.

Substrate is bound by residues 59–60 (NE) and 88–90 (WAP). Trp-104 provides a ligand contact to (1,4-alpha-D-glucosyl)n. Position 115–118 (115–118 (DYGK)) interacts with substrate. Position 140 (Lys-140) interacts with (1,4-alpha-D-glucosyl)n. A Phosphotyrosine modification is found at Tyr-170. 330–333 (EVLR) is a substrate binding site. The Nucleophile role is filled by Asp-354. Glu-409 serves as the catalytic Proton donor.

The protein belongs to the glycosyl hydrolase 13 family. GlgB subfamily. As to quaternary structure, monomer.

The catalysed reaction is Transfers a segment of a (1-&gt;4)-alpha-D-glucan chain to a primary hydroxy group in a similar glucan chain.. Its pathway is glycan biosynthesis; glycogen biosynthesis. Glycogen-branching enzyme participates in the glycogen biosynthetic process along with glycogenin and glycogen synthase. Generates alpha-1,6-glucosidic branches from alpha-1,4-linked glucose chains, to increase solubility of the glycogen polymer. The protein is 1,4-alpha-glucan-branching enzyme (GBE1) of Equus caballus (Horse).